Reading from the N-terminus, the 328-residue chain is Biotin synthase (328 aa).

The Radical SAM core domain maps to 41–260 (TAIETASLLS…VALARILMPA (220 aa)). The [4Fe-4S] cluster site is built by Cys56, Cys60, and Cys63. Residues Cys100, Cys131, Cys191, and Arg264 each contribute to the [2Fe-2S] cluster site.

It belongs to the radical SAM superfamily. Biotin synthase family. As to quaternary structure, homodimer. It depends on [4Fe-4S] cluster as a cofactor. [2Fe-2S] cluster serves as cofactor.

It catalyses the reaction (4R,5S)-dethiobiotin + (sulfur carrier)-SH + 2 reduced [2Fe-2S]-[ferredoxin] + 2 S-adenosyl-L-methionine = (sulfur carrier)-H + biotin + 2 5'-deoxyadenosine + 2 L-methionine + 2 oxidized [2Fe-2S]-[ferredoxin]. It functions in the pathway cofactor biosynthesis; biotin biosynthesis; biotin from 7,8-diaminononanoate: step 2/2. In terms of biological role, catalyzes the conversion of dethiobiotin (DTB) to biotin by the insertion of a sulfur atom into dethiobiotin via a radical-based mechanism. The polypeptide is Biotin synthase (Cereibacter sphaeroides (strain ATCC 17029 / ATH 2.4.9) (Rhodobacter sphaeroides)).